The primary structure comprises 418 residues: Alpha-1-antitrypsin (418 aa).

The signal sequence occupies residues 1 to 24 (MPSSVSWGILLLAGLCCLVPVSLA). Ser38 bears the Phosphoserine mark. 3 N-linked (GlcNAc...) asparagine glycosylation sites follow: Asn70, Asn107, and Asn271. The interval 373–392 (GAMFLEAIPMSIPPEVKFNK) is RCL. Phosphoserine is present on Ser383.

Belongs to the serpin family. As to quaternary structure, interacts with CELA2A. Interacts with ERGIC3 and LMAN1/ERGIC53. Interacts with PRSS1/Trypsin. As to expression, plasma.

The protein resides in the secreted. Functionally, inhibitor of serine proteases. Its primary target is elastase, but it also has a moderate affinity for plasmin and thrombin. Inhibits trypsin, chymotrypsin and plasminogen activator. The chain is Alpha-1-antitrypsin (SERPINA1) from Pongo abelii (Sumatran orangutan).